The chain runs to 306 residues: Agmatinase (306 aa).

Residues His-126, Asp-149, His-151, Asp-153, Asp-230, and Asp-232 each coordinate Mn(2+).

The protein belongs to the arginase family. Agmatinase subfamily. Requires Mn(2+) as cofactor.

The catalysed reaction is agmatine + H2O = urea + putrescine. The protein operates within amine and polyamine biosynthesis; putrescine biosynthesis via agmatine pathway; putrescine from agmatine: step 1/1. Catalyzes the formation of putrescine from agmatine. The protein is Agmatinase of Shigella sonnei (strain Ss046).